The sequence spans 454 residues: Na(+)/H(+) antiporter NhaA (454 aa).

The next 10 membrane-spanning stretches (helical) occupy residues 22–42, 64–84, 106–126, 150–170, 190–210, 228–248, 284–304, 306–326, 355–375, and 386–406; these read ISGL…NLPF, MGLG…TVGL, LCAV…ISLF, GWAV…ALFA, LLAI…YWFL, VPWL…FEAG, PFSA…VHFE, LTLA…LVVG, MFPA…IASL, and ARFG…ILLS.

This sequence belongs to the NhaA Na(+)/H(+) (TC 2.A.33) antiporter family.

It is found in the cell membrane. It catalyses the reaction Na(+)(in) + 2 H(+)(out) = Na(+)(out) + 2 H(+)(in). Functionally, na(+)/H(+) antiporter that extrudes sodium in exchange for external protons. This is Na(+)/H(+) antiporter NhaA from Bifidobacterium adolescentis (strain ATCC 15703 / DSM 20083 / NCTC 11814 / E194a).